Reading from the N-terminus, the 222-residue chain is Flagellar L-ring protein (222 aa).

A signal peptide spans methionine 1–alanine 18. Cysteine 19 is lipidated: N-palmitoyl cysteine. Cysteine 19 is lipidated: S-diacylglycerol cysteine.

It belongs to the FlgH family. As to quaternary structure, the basal body constitutes a major portion of the flagellar organelle and consists of four rings (L,P,S, and M) mounted on a central rod.

Its subcellular location is the cell outer membrane. The protein localises to the bacterial flagellum basal body. In terms of biological role, assembles around the rod to form the L-ring and probably protects the motor/basal body from shearing forces during rotation. In Thiobacillus denitrificans (strain ATCC 25259 / T1), this protein is Flagellar L-ring protein.